A 616-amino-acid chain; its full sequence is MKQSKMLIPTLREMPSDAQVISHALLMRAGYVRQVSAGIYAYLPLANRVLEKLKNIMREEFDEIGAVELLAPSLLTADLWRESGRYDTYGEDLYKLKNRDNSDFILGPTHEETMTSLVRDEITSYKKLPLNVYQIAPKFRDEKRPRYGLLRGREFLMKDGYSYHADQDSLDETYNDYKKAYEKIFERAGLNFKPIIADAGAMGGKDSQEFIAITDDRINLEKWLVLSKNITSIEEIPESVLSEIKEELGKWLIAGEDTIVYAEGGDYAANIEMASSQFEPNVAYTEELELEKVATPGAKTIDEVSKFLEIDEEQTVKTLVYHADDELVVVLLNGNDQLNEVKLTNYLGASFIEAASEAEVEEKFGAHFGSLGPIGLENVKIIADRKVEQIKNAVVGANVDGFHYKNANFGRDYEVEEFVDLRTVNEGEISPDGRGTLKFARGIEIGHIFKLGTRYTEAMNANILDANGRSIPMLMGCYGIGVSRLLSAILEQFARIYVEKTPREEFKFSWSINFPKELAPFDIHLVPVNVKDEAAMELTSELEEKLRGKGYQVLVDDRNERAGVKFADSDLIGLPVRVTIGKKAAEGVVEVKIRATGEVVEINKDELVNTIEILSK.

Belongs to the class-II aminoacyl-tRNA synthetase family. ProS type 1 subfamily. As to quaternary structure, homodimer.

Its subcellular location is the cytoplasm. The catalysed reaction is tRNA(Pro) + L-proline + ATP = L-prolyl-tRNA(Pro) + AMP + diphosphate. In terms of biological role, catalyzes the attachment of proline to tRNA(Pro) in a two-step reaction: proline is first activated by ATP to form Pro-AMP and then transferred to the acceptor end of tRNA(Pro). As ProRS can inadvertently accommodate and process non-cognate amino acids such as alanine and cysteine, to avoid such errors it has two additional distinct editing activities against alanine. One activity is designated as 'pretransfer' editing and involves the tRNA(Pro)-independent hydrolysis of activated Ala-AMP. The other activity is designated 'posttransfer' editing and involves deacylation of mischarged Ala-tRNA(Pro). The misacylated Cys-tRNA(Pro) is not edited by ProRS. The sequence is that of Proline--tRNA ligase from Lactococcus lactis subsp. lactis (strain IL1403) (Streptococcus lactis).